Reading from the N-terminus, the 263-residue chain is Small ribosomal subunit protein eS4, Y isoform 1 (263 aa).

The S4 RNA-binding domain occupies 42-104 (LPLIIFLRNR…TGEHFRLVYD (63 aa)).

The protein belongs to the eukaryotic ribosomal protein eS4 family.

The protein is Small ribosomal subunit protein eS4, Y isoform 1 (RPS4Y1) of Macaca fuscata fuscata (Japanese macaque).